The sequence spans 360 residues: DAZ-associated protein 1 (360 aa).

2 RRM domains span residues 10 to 97 and 114 to 191; these read GKLF…RSRP and NKIF…RAEP. Disordered stretches follow at residues 73-116 and 184-345; these read HTLD…SNKI and VEVK…DFPF. Basic and acidic residues-rich tracts occupy residues 91 to 112 and 184 to 195; these read QPER…ENSR and VEVKRAEPRDSK. The segment covering 203-231 has biased composition (polar residues); it reads GSNQWGSRAMQSTANGWTGQPPQTWQGYS. A compositionally biased stretch (gly residues) spans 242 to 253; sequence TIGGYGQPAGRG. The segment covering 271–301 has biased composition (pro residues); that stretch reads GPFPPPQGFPPGYATPPPFGYGYGPPPPPPD. The span at 328–345 shows a compositional bias: polar residues; sequence QSAQDLSKPPSGQQDFPF.

In terms of assembly, component of a mRNP complex, at least composed of DAZAP1, IGF2BP3-A, STAU and VgRBP60. Binds to the 3'-UTR of Vg1 mRNA. Interacts with profilin, a protein involved in actin assembly. Interacts with VgRBP71. As to expression, expressed in oocytes.

The protein resides in the cytoplasm. Functionally, RNA-binding protein, which is required during gametogenesis. May be involved in the actin-dependent anchoring of Vg1 mRNA in the vegetal cortex of the oocyte. The chain is DAZ-associated protein 1 (dazap1) from Xenopus laevis (African clawed frog).